A 196-amino-acid polypeptide reads, in one-letter code: Ribonuclease HII (196 aa).

The RNase H type-2 domain occupies 9–196 (RLVAGVDEVG…KPVRRALGIE (188 aa)). 3 residues coordinate a divalent metal cation: aspartate 15, glutamate 16, and aspartate 107.

This sequence belongs to the RNase HII family. Requires Mn(2+) as cofactor. It depends on Mg(2+) as a cofactor.

It is found in the cytoplasm. It carries out the reaction Endonucleolytic cleavage to 5'-phosphomonoester.. In terms of biological role, endonuclease that specifically degrades the RNA of RNA-DNA hybrids. This Aeromonas hydrophila subsp. hydrophila (strain ATCC 7966 / DSM 30187 / BCRC 13018 / CCUG 14551 / JCM 1027 / KCTC 2358 / NCIMB 9240 / NCTC 8049) protein is Ribonuclease HII.